We begin with the raw amino-acid sequence, 281 residues long: MEIWYTEKLELEKGRAVSYRVTKTIESLQSPFQKIDIFETQSFGRMFTLDGVTMVTNKDEHSYHEMIAHIPMMSHPNPESVLVIGGGDGGTVREVLKHPSVKEVVLCEIDKAVVDISYKYFPECADAMKDPKVIHHYDDGAKFARDNKGRFDVILVDSSDPVGPAEVLFKEPFFRDMASALKPTGIIATQAESFWYHGDVITSLFEFIPKIFPEYGYYYTTIPTYPSGIIGFTFLSNAIDPYAVTPDPKRVPKGLKYYSPEIHKAAFVLPEFAKAYIKRKG.

The PABS domain occupies 2-237 (EIWYTEKLEL…GIIGFTFLSN (236 aa)). Gln33 contacts S-methyl-5'-thioadenosine. Residues His64 and Asp88 each coordinate spermidine. S-methyl-5'-thioadenosine contacts are provided by residues Glu108 and 139 to 140 (DG). Residue Asp157 is the Proton acceptor of the active site. A spermidine-binding site is contributed by 157–160 (DSSD). Residue Pro164 participates in S-methyl-5'-thioadenosine binding.

It belongs to the spermidine/spermine synthase family. In terms of assembly, homodimer or homotetramer.

It is found in the cytoplasm. The catalysed reaction is S-adenosyl 3-(methylsulfanyl)propylamine + putrescine = S-methyl-5'-thioadenosine + spermidine + H(+). The protein operates within amine and polyamine biosynthesis; spermidine biosynthesis; spermidine from putrescine: step 1/1. Catalyzes the irreversible transfer of a propylamine group from the amino donor S-adenosylmethioninamine (decarboxy-AdoMet) to putrescine (1,4-diaminobutane) to yield spermidine. The protein is Polyamine aminopropyltransferase of Leptospira biflexa serovar Patoc (strain Patoc 1 / Ames).